The sequence spans 256 residues: Acetyl-coenzyme A carboxylase carboxyl transferase subunit alpha (256 aa).

The CoA carboxyltransferase C-terminal domain occupies 1–236 (MTKITRIVRE…KQELLVELEQ (236 aa)).

This sequence belongs to the AccA family. As to quaternary structure, acetyl-CoA carboxylase is a heterohexamer composed of biotin carboxyl carrier protein (AccB), biotin carboxylase (AccC) and two subunits each of ACCase subunit alpha (AccA) and ACCase subunit beta (AccD).

The protein localises to the cytoplasm. It catalyses the reaction N(6)-carboxybiotinyl-L-lysyl-[protein] + acetyl-CoA = N(6)-biotinyl-L-lysyl-[protein] + malonyl-CoA. It participates in lipid metabolism; malonyl-CoA biosynthesis; malonyl-CoA from acetyl-CoA: step 1/1. Component of the acetyl coenzyme A carboxylase (ACC) complex. First, biotin carboxylase catalyzes the carboxylation of biotin on its carrier protein (BCCP) and then the CO(2) group is transferred by the carboxyltransferase to acetyl-CoA to form malonyl-CoA. This is Acetyl-coenzyme A carboxylase carboxyl transferase subunit alpha from Streptococcus gordonii (strain Challis / ATCC 35105 / BCRC 15272 / CH1 / DL1 / V288).